The sequence spans 2171 residues: Voltage-dependent L-type calcium channel subunit alpha-1C (2171 aa).

Residues 1 to 154 (MLRALVQPAT…RACISIVEWK (154 aa)) lie on the Cytoplasmic side of the membrane. The tract at residues 77–98 (GAALSWQAAIDAARQAKLMGSA) is calmodulin-binding. Positions 103–128 (ISTVSSTQRKRQQYGKPKKQGSTTAT) are disordered. Basic residues predominate over residues 110–121 (QRKRQQYGKPKK). An I repeat occupies 141–438 (NPIRRACISI…LVLGVLSGEF (298 aa)). The helical transmembrane segment at 155-173 (PFEIIILLTIFANCVALAI) threads the bilayer. At 174 to 188 (YIPFPEDDSNATNSN) the chain is on the extracellular side. N-linked (GlcNAc...) asparagine glycosylation occurs at N183. Residues 189–209 (LERVEYLFLIIFTVEAFLKVI) form a helical membrane-spanning segment. At 210 to 218 (AYGLLFHPN) the chain is on the cytoplasmic side. A helical membrane pass occupies residues 219 to 239 (AYLRNGWNLLDFIIVVVGLFS). At 240–262 (AILEQATKADGANALGGKGAGFD) the chain is on the extracellular side. Residues 263–281 (VKALRAFRVLRPLRLVSGV) traverse the membrane as a helical segment. At 282–298 (PSLQVVLNSIIKAMVPL) the chain is on the cytoplasmic side. The chain crosses the membrane as a helical span at residues 299-320 (LHIALLVLFVIIIYAIIGLELF). At 321-380 (MGKMHKTCYNQEGVADVPAEDDPSPCALETGHGRQCQNGTVCKPGWDGPKHGITNFDNFA) the chain is on the extracellular side. Intrachain disulfides connect C328/C356 and C346/C362. N358 is a glycosylation site (N-linked (GlcNAc...) asparagine). The pore-forming intramembrane region spans 381–402 (FAMLTVFQCITMEGWTDVLYWM). The short motif at 391–394 (TMEG) is the Selectivity filter of repeat I element. E393 serves as a coordination point for Ca(2+). Residues 403 to 410 (QDAMGYEL) lie on the Extracellular side of the membrane. A helical transmembrane segment spans residues 411–431 (PWVYFVSLVIFGSFFVLNLVL). The Cytoplasmic portion of the chain corresponds to 432-554 (GVLSGEFSKE…RKCRAAVKSN (123 aa)). The AID/alpha-interaction domain; mediates interaction with the beta subunit stretch occupies residues 458–475 (QQLEEDLKGYLDWITQAE). The interval 479–511 (PENEDEGMDEEKPRNMSMPTSETESVNTENVAG) is disordered. Polar residues predominate over residues 495–508 (SMPTSETESVNTEN). Residue S499 is modified to Phosphoserine. Position 506 is a phosphothreonine (T506). One copy of the II repeat lies at 540–786 (NRFCRRKCRA…VFLAIAVDNL (247 aa)). Residues 555-573 (VFYWLVIFLVFLNTLTIAS) traverse the membrane as a helical segment. Topologically, residues 574–584 (EHYNQPHWLTE) are extracellular. The chain crosses the membrane as a helical span at residues 585 to 605 (VQDTANKALLALFTAEMLLKM). The Cytoplasmic segment spans residues 606–616 (YSLGLQAYFVS). Residues 617–636 (LFNRFDCFIVCGGILETILV) form a helical membrane-spanning segment. The Extracellular portion of the chain corresponds to 637–645 (ETKVMSPLG). Residues 646–664 (ISVLRCVRLLRIFKITRYW) traverse the membrane as a helical segment. Residues 665–683 (NSLSNLVASLLNSVRSIAS) are Cytoplasmic-facing. A helical membrane pass occupies residues 684–703 (LLLLLFLFIIIFSLLGMQLF). At 704 to 723 (GGKFNFDEMQTRRSTFDNFP) the chain is on the extracellular side. An intramembrane region (pore-forming) is located at residues 724–745 (QSLLTVFQILTGEDWNSVMYDG). A Selectivity filter of repeat II motif is present at residues 734 to 737 (TGED). E736 is a binding site for Ca(2+). Residues 746-755 (IMAYGGPSFP) lie on the Extracellular side of the membrane. A helical membrane pass occupies residues 756 to 775 (GMLVCIYFIILFICGNYILL). The Cytoplasmic portion of the chain corresponds to 776–930 (NVFLAIAVDN…LQCHRIVNDT (155 aa)). The tract at residues 794–891 (SAQKEEEEEK…EMPVGPRPRP (98 aa)) is disordered. Residues 813-836 (SPEKKQEVVGKPALEEAKEEKIEL) are compositionally biased toward basic and acidic residues. 2 positions are modified to phosphoserine: S838 and S845. Positions 859 to 906 (NESEDKSPYPNPETTGEEDEEEPEMPVGPRPRPLSELHLKEKAVPMPE) are interaction with STAC2. Positions 873–882 (TGEEDEEEPE) are enriched in acidic residues. The III repeat unit spans residues 917-1199 (NRFRLQCHRI…IFVGFVIVTF (283 aa)). The chain crosses the membrane as a helical span at residues 931–949 (IFTNLILFFILLSSISLAA). The Extracellular portion of the chain corresponds to 950–961 (EDPVQHTSFRNH). A helical membrane pass occupies residues 962–981 (ILFYFDIVFTTIFTIEIALK). At 982–997 (MTAYGAFLHKGSFCRN) the chain is on the cytoplasmic side. The helical transmembrane segment at 998–1016 (YFNILDLLVVSVSLISFGI) threads the bilayer. The Extracellular segment spans residues 1017–1023 (QSSAINV). The chain crosses the membrane as a helical span at residues 1024–1042 (VKILRVLRVLRPLRAINRA). Over 1043–1061 (KGLKHVVQCVFVAIRTIGN) the chain is Cytoplasmic. The chain crosses the membrane as a helical span at residues 1062–1081 (IVIVTTLLQFMFACIGVQLF). Residues 1082 to 1131 (KGKLYTCSDSSKQTEAECKGNYITYKDGEVDHPIIQPRSWENSKFDFDNV) lie on the Extracellular side of the membrane. C1088 and C1099 are joined by a disulfide. A dihydropyridine binding region spans residues 1119–1208 (RSWENSKFDF…FQEQGEQEYK (90 aa)). Residues 1132–1152 (LAAMMALFTVSTFEGWPELLY) constitute an intramembrane region (pore-forming). The Selectivity filter of repeat III motif lies at 1143 to 1146 (TFEG). E1145 serves as a coordination point for Ca(2+). Residues 1153 to 1169 (RSIDSHTEDKGPIYNYR) are Extracellular-facing. A helical transmembrane segment spans residues 1170-1191 (VEISIFFIIYIIIIAFFMMNIF). Residues 1192-1249 (VGFVIVTFQEQGEQEYKNCELDKNQRQCVEYALKARPLRRYIPKNQHQYKVWYVVNST) lie on the Cytoplasmic side of the membrane. An IV repeat occupies 1236–1509 (NQHQYKVWYV…LFVAVIMDNF (274 aa)). The helical transmembrane segment at 1250 to 1271 (YFEYLMFVLILLNTICLAMQHY) threads the bilayer. Over 1272–1279 (GQSCLFKI) the chain is Extracellular. Residues 1280 to 1301 (AMNILNMLFTGLFTVEMILKLI) form a helical membrane-spanning segment. Topologically, residues 1302–1311 (AFKPKGYFSD) are cytoplasmic. Residues 1312–1331 (PWNVFDFLIVIGSIIDVILS) traverse the membrane as a helical segment. Residues 1332 to 1354 (ETNPAEHTQCSPSMNAEENSRIS) are Extracellular-facing. The helical transmembrane segment at 1355–1373 (ITFFRLFRVMRLVKLLSRG) threads the bilayer. Over 1374-1391 (EGIRTLLWTFIKSFQALP) the chain is Cytoplasmic. A helical transmembrane segment spans residues 1392–1412 (YVALLIVMLFFIYAVIGMQVF). Over 1413-1434 (GKIALNDTTEINRNNNFQTFPQ) the chain is Extracellular. N-linked (GlcNAc...) asparagine glycosylation occurs at N1418. Positions 1435–1453 (AVLLLFRCATGEAWQDIML) form an intramembrane region, pore-forming. A Selectivity filter of repeat IV motif is present at residues 1444 to 1447 (TGEA). Residues 1454-1481 (ACMPGKKCAPESEPHNSTEGETPCGSSF) lie on the Extracellular side of the membrane. Positions 1460–1528 (KCAPESEPHN…LGPHHLDEFK (69 aa)) are dihydropyridine binding. C1461 and C1477 are joined by a disulfide. N1469 carries N-linked (GlcNAc...) asparagine glycosylation. Residues 1474-1516 (ETPCGSSFAVFYFISFYMLCAFLIINLFVAVIMDNFDYLTRDW) form a phenylalkylamine binding region. A helical transmembrane segment spans residues 1482–1506 (AVFYFISFYMLCAFLIINLFVAVIM). The Cytoplasmic segment spans residues 1507-2171 (DNFDYLTRDW…ADRRAGVSSL (665 aa)). An important for interaction with STAC1, STAC2 and STAC3 region spans residues 1641-1668 (DEVTVGKFYATFLIQEYFRKFKKRKEQG). Positions 1647–1667 (KFYATFLIQEYFRKFKKRKEQ) are calmodulin-binding IQ region. The important for localization in at the junctional membrane stretch occupies residues 1681–1700 (LQAGLRTLHDIGPEIRRAIS). 2 positions are modified to phosphoserine: S1700 and S1721. The disordered stretch occupies residues 1760–1797 (ISKAGNNQGDTESPSHEKLVDSTFTPSSYSSTGSNANI). Positions 1781-1793 (STFTPSSYSSTGS) are enriched in polar residues. S1928 carries the phosphoserine; by PKA modification. 3 disordered regions span residues 1971-2014 (RSHS…EKLN), 2026-2060 (SGEN…GRQF), and 2114-2155 (SGGA…PGCG). Positions 2130 to 2140 (NRRDPGRDRAG) are enriched in basic and acidic residues.

Belongs to the calcium channel alpha-1 subunit (TC 1.A.1.11) family. CACNA1C subfamily. In terms of assembly, component of a calcium channel complex consisting of a pore-forming alpha subunit (CACNA1C) and ancillary beta, gamma and delta subunits. The channel complex contains alpha, beta, gamma and delta subunits in a 1:1:1:1 ratio, i.e. it contains only one of each type of subunit. CACNA1C channel activity is modulated by ancillary subunits, such as CACNB1, CACNB2, CACNB3, CACNA2D1 and CACNA2D4. Interacts with CACNB1. Interacts with CACNB2. Identified in a complex with CACNA2D4 and CACNB3. Interacts with CACNB3. Interacts with CACNA2D1. Interacts with the gamma subunits CACNG4, CACNG6, CACNG7 and CACNG8. Interacts with CACNA2D4. Interacts with CALM1. Interacts (via the N-terminus and the C-terminal C and IQ motifs) with CABP1; this inhibits Ca(2+)-dependent channel inactivation. The binding via the C motif is calcium independent whereas the binding via IQ requires the presence of calcium and is mutually exclusive with calmodulin binding. The binding to the cytoplasmic N-terminal domain is calcium independent but is essential for the channel modulation. Interacts (via C-terminal CDB motif) with CABP5; in a calcium-dependent manner. Interacts with CIB1; the interaction increases upon cardiomyocytes hypertrophy. Interacts with STAC1, STAC2 and STAC3; this inhibits channel inactivation, probably by hindering CALM1 binding. In terms of processing, phosphorylation by PKA at Ser-1928 activates the channel. Elevated levels of blood glucose lead to increased phosphorylation by PKA. In terms of tissue distribution, expression in cardiac muscle. In lung, expressed in airway and vascular smooth muscle cells.

The protein resides in the cell membrane. The protein localises to the sarcolemma. Its subcellular location is the perikaryon. It localises to the postsynaptic density membrane. It is found in the cell projection. The protein resides in the dendrite. The protein localises to the T-tubule. It catalyses the reaction Ca(2+)(in) = Ca(2+)(out). Its activity is regulated as follows. Inhibited by dihydropyridines (DHP), such as isradipine. Inhibited by nifedipine. Channel activity is regulated by Ca(2+) and calmodulin. Binding of STAC1, STAC2 or STAC3 to a region that overlaps with the calmodulin binding site inhibits channel inactivation by Ca(2+) and calmodulin. Binding of calmodulin or CABP1 at the same regulatory sites results in opposite effects on the channel function. Shear stress and pressure increases calcium channel activity. Pore-forming, alpha-1C subunit of the voltage-gated calcium channel that gives rise to L-type calcium currents. Mediates influx of calcium ions into the cytoplasm, and thereby triggers calcium release from the sarcoplasm. Plays an important role in excitation-contraction coupling in the heart. Required for normal heart development and normal regulation of heart rhythm. Required for normal contraction of smooth muscle cells in blood vessels and in the intestine. Essential for normal blood pressure regulation via its role in the contraction of arterial smooth muscle cells. Long-lasting (L-type) calcium channels belong to the 'high-voltage activated' (HVA) group. The chain is Voltage-dependent L-type calcium channel subunit alpha-1C (CACNA1C) from Oryctolagus cuniculus (Rabbit).